We begin with the raw amino-acid sequence, 901 residues long: HTH-type transcriptional regulator MalT (901 aa).

39–46 (SPAGYGKT) is a binding site for ATP. The 66-residue stretch at 829–894 (ELIRTSPLTQ…AAVQHAQKLL (66 aa)) folds into the HTH luxR-type domain. The H-T-H motif DNA-binding region spans 853–872 (NEQIAGELEVAATTIKTHIR).

The protein belongs to the MalT family. In terms of assembly, monomer in solution. Oligomerizes to an active state in the presence of the positive effectors ATP and maltotriose.

Activated by ATP and maltotriose, which are both required for DNA binding. Functionally, positively regulates the transcription of the maltose regulon whose gene products are responsible for uptake and catabolism of malto-oligosaccharides. Specifically binds to the promoter region of its target genes, recognizing a short DNA motif called the MalT box. The polypeptide is HTH-type transcriptional regulator MalT (Escherichia coli O6:K15:H31 (strain 536 / UPEC)).